Reading from the N-terminus, the 356-residue chain is Tyrosine recombinase XerS (356 aa).

Positions 16 to 121 (IMPWFVLDYY…ALSSLYKYLT (106 aa)) constitute a Core-binding (CB) domain. Residues 169–354 (EFLDYVDCEY…VNDEQKNALD (186 aa)) form the Tyr recombinase domain. Residues arginine 210, lysine 234, histidine 306, arginine 309, and histidine 332 contribute to the active site. The active-site O-(3'-phospho-DNA)-tyrosine intermediate is the tyrosine 341.

The protein belongs to the 'phage' integrase family. XerS subfamily.

The protein localises to the cytoplasm. With respect to regulation, ftsK is required for recombination. Its function is as follows. Site-specific tyrosine recombinase, which acts by catalyzing the cutting and rejoining of the recombining DNA molecules. Essential to convert dimers of the bacterial chromosome into monomers to permit their segregation at cell division. This is Tyrosine recombinase XerS from Streptococcus uberis (strain ATCC BAA-854 / 0140J).